A 252-amino-acid chain; its full sequence is Chitooligosaccharide deacetylase (252 aa).

Residues His-61 and His-125 each coordinate Mg(2+).

The protein belongs to the YdjC deacetylase family. ChbG subfamily. Homodimer. Requires Mg(2+) as cofactor.

The protein localises to the cytoplasm. The enzyme catalyses N,N'-diacetylchitobiose + H2O = N-acetyl-beta-D-glucosaminyl-(1-&gt;4)-D-glucosamine + acetate. The catalysed reaction is diacetylchitobiose-6'-phosphate + H2O = N'-monoacetylchitobiose-6'-phosphate + acetate. Its pathway is glycan degradation; chitin degradation. Involved in the degradation of chitin. ChbG is essential for growth on the acetylated chitooligosaccharides chitobiose and chitotriose but is dispensable for growth on cellobiose and chitosan dimer, the deacetylated form of chitobiose. Deacetylation of chitobiose-6-P and chitotriose-6-P is necessary for both the activation of the chb promoter by the regulatory protein ChbR and the hydrolysis of phosphorylated beta-glucosides by the phospho-beta-glucosidase ChbF. Catalyzes the removal of only one acetyl group from chitobiose-6-P to yield monoacetylchitobiose-6-P, the inducer of ChbR and the substrate of ChbF. The chain is Chitooligosaccharide deacetylase from Escherichia coli (strain 55989 / EAEC).